The chain runs to 162 residues: 2-C-methyl-D-erythritol 2,4-cyclodiphosphate synthase (162 aa).

A divalent metal cation is bound by residues D10 and H12. 4-CDP-2-C-methyl-D-erythritol 2-phosphate contacts are provided by residues 10–12 (DVH) and 36–37 (HS). H44 lines the a divalent metal cation pocket. 4-CDP-2-C-methyl-D-erythritol 2-phosphate-binding positions include 58–60 (DIG), 63–67 (FSDTD), and R144.

This sequence belongs to the IspF family. Homotrimer. A divalent metal cation is required as a cofactor.

The catalysed reaction is 4-CDP-2-C-methyl-D-erythritol 2-phosphate = 2-C-methyl-D-erythritol 2,4-cyclic diphosphate + CMP. It functions in the pathway isoprenoid biosynthesis; isopentenyl diphosphate biosynthesis via DXP pathway; isopentenyl diphosphate from 1-deoxy-D-xylulose 5-phosphate: step 4/6. Functionally, involved in the biosynthesis of isopentenyl diphosphate (IPP) and dimethylallyl diphosphate (DMAPP), two major building blocks of isoprenoid compounds. Catalyzes the conversion of 4-diphosphocytidyl-2-C-methyl-D-erythritol 2-phosphate (CDP-ME2P) to 2-C-methyl-D-erythritol 2,4-cyclodiphosphate (ME-CPP) with a corresponding release of cytidine 5-monophosphate (CMP). The chain is 2-C-methyl-D-erythritol 2,4-cyclodiphosphate synthase from Burkholderia thailandensis (strain ATCC 700388 / DSM 13276 / CCUG 48851 / CIP 106301 / E264).